The sequence spans 447 residues: MLLDAGPQYPAIGVTTFGASRHHSAGDVAERDVGLGINPFADGMGAFKLNPSSHELASAGQTAFTSQAPGYAAAAALGHHHHPGHVGSYSSAAFNSTRDFLFRNRGFGDAAAAASAQHSLFAASAGGFGGPHGHTDAAGHLLFSGLHEQAAGHASPNVVNGQMRLGFSGDMYPRPEQYGQVTSPRSEHYAAPQLHGYGPMNVNMAAHHGAGAFFRYMRQPIKQELICKWIEPEQLANPKKSCNKTFSTMHELVTHVTVEHVGGPEQSNHICFWEECPREGKPFKAKYKLVNHIRVHTGEKPFPCPFPGCGKVFARSENLKIHKRTHTGEKPFKCEFEGCDRRFANSSDRKKHMHVHTSDKPYLCKMCDKSYTHPSSLRKHMKVHESSSQGSQPSPAASSGYESSTPPTIVSPTTDNPTTSSMSPSSSAVHHTAGHSALSSNFNEWYV.

The C2H2-type 1; atypical zinc finger occupies 225–260 (LICKWIEPEQLANPKKSCNKTFSTMHELVTHVTVEH). A C2H2-type 2; atypical zinc finger spans residues 269-296 (HICFWEECPREGKPFKAKYKLVNHIRVH). 3 C2H2-type zinc fingers span residues 302 to 326 (FPCP…KRTH), 332 to 356 (FKCE…MHVH), and 362 to 384 (YLCK…MKVH). The disordered stretch occupies residues 375–434 (SSLRKHMKVHESSSQGSQPSPAASSGYESSTPPTIVSPTTDNPTTSSMSPSSSAVHHTAG). The segment covering 386–427 (SSSQGSQPSPAASSGYESSTPPTIVSPTTDNPTTSSMSPSSS) has biased composition (low complexity).

Belongs to the GLI C2H2-type zinc-finger protein family. As to quaternary structure, interacts (via the C2H2-type domains 3, 4 and 5) with MDFIC (via the C2H2-type domains 3, 4 and 5). Interacts with GLI1; the interaction enhances transcription activation. Interacts with GLI2. Interacts with GLI3; the interaction enhances transcription activation. As to expression, expressed in osteoblasts (at protein level). Expressed in the CNS. A high level expression is seen in the cerebellum, while a low level expression is seen in the olfactory bulb, diencephalon, and brainstem. Expressed in lumbar spine and iliac crest.

The protein localises to the nucleus. Its subcellular location is the cytoplasm. In terms of biological role, acts as a transcriptional activator. Involved in neurogenesis. Plays important roles in the early stage of organogenesis of the CNS, as well as during dorsal spinal cord development and maturation of the cerebellum. Involved in the spatial distribution of mossy fiber (MF) neurons within the pontine gray nucleus (PGN). Plays a role in the regulation of MF axon pathway choice. Promotes MF migration towards ipsilaterally-located cerebellar territories. May have a role in shear flow mechanotransduction in osteocytes. Retains nuclear GLI1 and GLI3 in the cytoplasm. Binds to the minimal GLI-consensus sequence 5'-TGGGTGGTC-3'. This chain is Zinc finger protein ZIC 1 (Zic1), found in Mus musculus (Mouse).